The sequence spans 386 residues: Probable serine/threonine-protein kinase PBL23 (386 aa).

Cysteine 5 is lipidated: S-palmitoyl cysteine. The Protein kinase domain occupies 82–360 (FNPDNQLGEG…SDVVTALEYL (279 aa)). ATP contacts are provided by residues 88–96 (LGEGGFGRV) and lysine 111. Aspartate 210 acts as the Proton acceptor in catalysis. The segment at 365-386 (TEEDGQTVEGEEEEEEDERSKL) is disordered. Acidic residues predominate over residues 368-386 (DGQTVEGEEEEEEDERSKL).

The protein belongs to the protein kinase superfamily. Ser/Thr protein kinase family.

Its subcellular location is the cell membrane. The enzyme catalyses L-seryl-[protein] + ATP = O-phospho-L-seryl-[protein] + ADP + H(+). The catalysed reaction is L-threonyl-[protein] + ATP = O-phospho-L-threonyl-[protein] + ADP + H(+). Its function is as follows. May be involved in plant defense signaling. The polypeptide is Probable serine/threonine-protein kinase PBL23 (Arabidopsis thaliana (Mouse-ear cress)).